The following is a 292-amino-acid chain: Leucine-rich repeat-containing protein 10B (292 aa).

Residues 1–20 (MGIAESTPDELPSDAEEQLR) form a disordered region. A compositionally biased stretch (acidic residues) spans 7–16 (TPDELPSDAE). LRR repeat units lie at residues 22–43 (GDQQ…VCAL), 45–66 (RLQK…IEEL), 68–90 (ELRI…CRLP), 91–112 (RLTR…FAQL), 114–136 (SLRC…LRLV), 137–158 (ALQS…LPRM), 160–181 (GLRG…LLRM), 183–204 (RLHI…HPLR), and 205–226 (ALRV…ADTV). The segment at 236–261 (RMAERDEPTPRPPPRRPARAFEDEEE) is disordered.

This Homo sapiens (Human) protein is Leucine-rich repeat-containing protein 10B (LRRC10B).